The primary structure comprises 423 residues: uncharacterized protein (423 aa).

Residues 1–16 form the signal peptide; sequence MKSRIFFITLLTIVAA. Residues 17–402 are Extracellular-facing; the sequence is QESADQLCSS…SSSAKEEQTS (386 aa). Intrachain disulfides connect Cys-24–Cys-217, Cys-33–Cys-43, Cys-36–Cys-68, Cys-46–Cys-57, Cys-219–Cys-238, Cys-230–Cys-241, Cys-243–Cys-252, Cys-254–Cys-288, Cys-271–Cys-286, Cys-280–Cys-291, Cys-293–Cys-303, Cys-305–Cys-327, Cys-310–Cys-325, Cys-319–Cys-330, Cys-332–Cys-341, and Cys-343–Cys-350. The N-linked (GlcNAc...) asparagine glycan is linked to Asn-65. The cysteine-rich tandem repeats stretch occupies residues 215–350; that stretch reads CGCECEKHPE…CSCSTASNNC (136 aa). I-EGF domains are found at residues 219–253, 254–304, and 305–342; these read CEKHPEINSRLCHQNGHLVCGQCVCDQSRGGDKCE, CPLA…KFCQ, and CDNDSCPLAVNGKVCSGNGVCDCGVCKCEMGWERDDCS. Asn-274 is a glycosylation site (N-linked (GlcNAc...) asparagine). N-linked (GlcNAc...) asparagine glycosylation is present at Asn-307. The disordered stretch occupies residues 354–406; the sequence is GTPAPEEKDKPESVPEEPEATEKPDDMPSDSDLEKELDESSSAKEEQTSSSGV. Positions 380 to 392 are enriched in acidic residues; that stretch reads MPSDSDLEKELDE. A helical transmembrane segment spans residues 403-421; it reads SSGVVSRVCVLLTFFLLVL. Topologically, residues 422-423 are cytoplasmic; it reads NF.

Belongs to the integrin beta chain family.

It localises to the membrane. This is an uncharacterized protein from Caenorhabditis elegans.